Here is a 231-residue protein sequence, read N- to C-terminus: 7-cyano-7-deazaguanine synthase (231 aa).

8-18 (FSGGQDSTTCL) contributes to the ATP binding site. Zn(2+)-binding residues include C187, C196, C199, and C202.

Belongs to the QueC family. The cofactor is Zn(2+).

It catalyses the reaction 7-carboxy-7-deazaguanine + NH4(+) + ATP = 7-cyano-7-deazaguanine + ADP + phosphate + H2O + H(+). It functions in the pathway purine metabolism; 7-cyano-7-deazaguanine biosynthesis. Functionally, catalyzes the ATP-dependent conversion of 7-carboxy-7-deazaguanine (CDG) to 7-cyano-7-deazaguanine (preQ(0)). The polypeptide is 7-cyano-7-deazaguanine synthase (Vibrio vulnificus (strain CMCP6)).